The following is a 367-amino-acid chain: MKKQRIVVKIGSSSLADSHEGISKEQLSDHVAALARLKEEGHEVLLITSGAVAAGFSALGYPSRPVTIKGKQAAAAVGQSLLMQAYTEEFRKYGIVTAQLLLTRSDFSRKEQYSNAYATLGELLNRSALPIINENDSISLEELTFGDNDMLSALVSGLVSADMLMIFTDVNGLYDKNPQKNEDAKKYYFLPEVTEEIASLAGDAGSKLGTGGMKSKVDAAKTALSLGVSVFIGTGRGQEKFVDVLKGKGDGTYVGNAPQKEMKMNKQWIALHSVVSGQIEIDAGAATAIIQHGKSLLPAGVTNVSGFFQVGEVVEVMTQQGRVIGKGQCTYSAEELRDVKGMQSQHIQARGERHSYEVIHRDHWVSL.

Lys9 contacts ATP. Substrate contacts are provided by Ser49, Asp136, and Asn148. ATP contacts are provided by residues 168 to 169 (TD) and 210 to 216 (TGGMKSK). The PUA domain occupies 276–350 (SGQIEIDAGA…GMQSQHIQAR (75 aa)).

This sequence belongs to the glutamate 5-kinase family.

It is found in the cytoplasm. The enzyme catalyses L-glutamate + ATP = L-glutamyl 5-phosphate + ADP. Its pathway is amino-acid biosynthesis; L-proline biosynthesis; L-glutamate 5-semialdehyde from L-glutamate: step 1/2. Catalyzes the transfer of a phosphate group to glutamate to form L-glutamate 5-phosphate. This chain is Glutamate 5-kinase, found in Bacillus cereus (strain ZK / E33L).